Consider the following 96-residue polypeptide: Integration host factor subunit alpha (96 aa).

Belongs to the bacterial histone-like protein family. In terms of assembly, heterodimer of an alpha and a beta chain.

Its function is as follows. This protein is one of the two subunits of integration host factor, a specific DNA-binding protein that functions in genetic recombination as well as in transcriptional and translational control. The chain is Integration host factor subunit alpha from Haemophilus influenzae (strain 86-028NP).